The chain runs to 346 residues: 3-keto-steroid reductase ERG27 (346 aa).

Leu-19, Thr-42, and Lys-48 together coordinate NADP(+). Active-site proton donor residues include Ser-182 and Tyr-205. Residues Tyr-205, Lys-209, and Ser-241 each contribute to the NADP(+) site. Lys-209 acts as the Lowers pKa of active site Tyr in catalysis. The helical transmembrane segment at 242 to 262 threads the bilayer; that stretch reads FSFFQYLNVFTYYGMLFLFYL. Asn-272 carries N-linked (GlcNAc...) asparagine glycosylation.

This sequence belongs to the short-chain dehydrogenases/reductases (SDR) family. ERG27 subfamily. In terms of assembly, heterotetramer of ERG25, ERG26, ERG27 and ERG28. ERG28 acts as a scaffold to tether ERG27 and other 4,4-demethylation-related enzymes, forming a demethylation enzyme complex, in the endoplasmic reticulum. Interacts with ERG25 and ERG28. Also interacts with ERG7, but only in lipid particles.

The protein localises to the endoplasmic reticulum membrane. It is found in the lipid droplet. It carries out the reaction 3-dehydro-4alpha-methylzymosterol + NADPH + H(+) = 4alpha-methylzymosterol + NADP(+). It participates in steroid biosynthesis; zymosterol biosynthesis; zymosterol from lanosterol: step 5/6. In terms of biological role, 3-keto-steroid reductase; part of the third module of ergosterol biosynthesis pathway that includes the late steps of the pathway. ERG27 is a catalytic component of the C-4 demethylation complex that catalyzes the reduction of the keto group on the C-3. The third module or late pathway involves the ergosterol synthesis itself through consecutive reactions that mainly occur in the endoplasmic reticulum (ER) membrane. Firstly, the squalene synthase ERG9 catalyzes the condensation of 2 farnesyl pyrophosphate moieties to form squalene, which is the precursor of all steroids. Squalene synthase is crucial for balancing the incorporation of farnesyl diphosphate (FPP) into sterol and nonsterol isoprene synthesis. Secondly, the squalene epoxidase ERG1 catalyzes the stereospecific oxidation of squalene to (S)-2,3-epoxysqualene, which is considered to be a rate-limiting enzyme in steroid biosynthesis. Then, the lanosterol synthase ERG7 catalyzes the cyclization of (S)-2,3 oxidosqualene to lanosterol, a reaction that forms the sterol core. In the next steps, lanosterol is transformed to zymosterol through a complex process involving various demethylation, reduction and desaturation reactions. The lanosterol 14-alpha-demethylase ERG11 (also known as CYP51) catalyzes C14-demethylation of lanosterol to produce 4,4'-dimethyl cholesta-8,14,24-triene-3-beta-ol, which is critical for ergosterol biosynthesis. The C-14 reductase ERG24 reduces the C14=C15 double bond of 4,4-dimethyl-cholesta-8,14,24-trienol to produce 4,4-dimethyl-cholesta-8,24-dienol. 4,4-dimethyl-cholesta-8,24-dienol is substrate of the C-4 demethylation complex ERG25-ERG26-ERG27 in which ERG25 catalyzes the three-step monooxygenation required for the demethylation of 4,4-dimethyl and 4alpha-methylsterols, ERG26 catalyzes the oxidative decarboxylation that results in a reduction of the 3-beta-hydroxy group at the C-3 carbon to an oxo group, and ERG27 is responsible for the reduction of the keto group on the C-3. ERG28 has a role as a scaffold to help anchor ERG25, ERG26 and ERG27 to the endoplasmic reticulum and ERG29 regulates the activity of the iron-containing C4-methylsterol oxidase ERG25. Then, the sterol 24-C-methyltransferase ERG6 catalyzes the methyl transfer from S-adenosyl-methionine to the C-24 of zymosterol to form fecosterol. The C-8 sterol isomerase ERG2 catalyzes the reaction which results in unsaturation at C-7 in the B ring of sterols and thus converts fecosterol to episterol. The sterol-C5-desaturase ERG3 then catalyzes the introduction of a C-5 double bond in the B ring to produce 5-dehydroepisterol. The C-22 sterol desaturase ERG5 further converts 5-dehydroepisterol into ergosta-5,7,22,24(28)-tetraen-3beta-ol by forming the C-22(23) double bond in the sterol side chain. Finally, ergosta-5,7,22,24(28)-tetraen-3beta-ol is substrate of the C-24(28) sterol reductase ERG4 to produce ergosterol. Facilitates the association of ERG7 with lipid particles preventing its digestion in the endoplasmic reticulum and the lipid particles. This Candida albicans (Yeast) protein is 3-keto-steroid reductase ERG27.